Reading from the N-terminus, the 331-residue chain is NADH-cytochrome b5 reductase 2 (331 aa).

A helical transmembrane segment spans residues 36–56; it reads VGILIASAVGMAGFGTYFMFG. Residues 80-185 enclose the FAD-binding FR-type domain; the sequence is KGFVSLQLDD…KGPLPKYEWS (106 aa). 188 to 223 contacts FAD; that stretch reads KHPHVAMIAGGTGITPMYQIMRAIFKNPADKTKVTL.

This sequence belongs to the flavoprotein pyridine nucleotide cytochrome reductase family. FAD is required as a cofactor.

It is found in the mitochondrion outer membrane. It carries out the reaction 2 Fe(III)-[cytochrome b5] + NADH = 2 Fe(II)-[cytochrome b5] + NAD(+) + H(+). In terms of biological role, may mediate the reduction of outer membrane cytochrome b5. The polypeptide is NADH-cytochrome b5 reductase 2 (MCR1) (Pyricularia oryzae (strain 70-15 / ATCC MYA-4617 / FGSC 8958) (Rice blast fungus)).